We begin with the raw amino-acid sequence, 875 residues long: Leucine--tRNA ligase (875 aa).

A 'HIGH' region motif is present at residues Pro43–His53. A 'KMSKS' region motif is present at residues Lys631–Ser635. ATP is bound at residue Lys634.

It belongs to the class-I aminoacyl-tRNA synthetase family.

The protein localises to the cytoplasm. The catalysed reaction is tRNA(Leu) + L-leucine + ATP = L-leucyl-tRNA(Leu) + AMP + diphosphate. The polypeptide is Leucine--tRNA ligase (Mesorhizobium japonicum (strain LMG 29417 / CECT 9101 / MAFF 303099) (Mesorhizobium loti (strain MAFF 303099))).